A 194-amino-acid chain; its full sequence is Probable proteasome subunit beta type-4 (194 aa).

It belongs to the peptidase T1B family. The 26S proteasome consists of a 20S proteasome core and two 19S regulatory subunits. The 20S proteasome core is composed of 28 subunits that are arranged in four stacked rings, resulting in a barrel-shaped structure. The two end rings are each formed by seven alpha subunits, and the two central rings are each formed by seven beta subunits. The catalytic chamber with the active sites is on the inside of the barrel.

The protein localises to the cytoplasm. It localises to the nucleus. Non-catalytic component of the proteasome, a multicatalytic proteinase complex which is characterized by its ability to cleave peptides with Arg, Phe, Tyr, Leu, and Glu adjacent to the leaving group at neutral or slightly basic pH. The proteasome has an ATP-dependent proteolytic activity. In Schizosaccharomyces pombe (strain 972 / ATCC 24843) (Fission yeast), this protein is Probable proteasome subunit beta type-4.